Consider the following 63-residue polypeptide: Large ribosomal subunit protein uL29 (63 aa).

This sequence belongs to the universal ribosomal protein uL29 family.

The sequence is that of Large ribosomal subunit protein uL29 from Histophilus somni (strain 129Pt) (Haemophilus somnus).